The primary structure comprises 317 residues: N-acetyl-gamma-glutamyl-phosphate reductase (317 aa).

The active site involves Cys-136.

Belongs to the NAGSA dehydrogenase family. Type 1 subfamily.

The protein resides in the cytoplasm. It carries out the reaction N-acetyl-L-glutamate 5-semialdehyde + phosphate + NADP(+) = N-acetyl-L-glutamyl 5-phosphate + NADPH + H(+). The protein operates within amino-acid biosynthesis; L-arginine biosynthesis; N(2)-acetyl-L-ornithine from L-glutamate: step 3/4. Catalyzes the NADPH-dependent reduction of N-acetyl-5-glutamyl phosphate to yield N-acetyl-L-glutamate 5-semialdehyde. The chain is N-acetyl-gamma-glutamyl-phosphate reductase from Stenotrophomonas maltophilia (strain R551-3).